Reading from the N-terminus, the 44-residue chain is NNFYSYNAFITAAKSFPGFGTTGDTAVRGPIQISYNYNYGPCGR.

It belongs to the glycosyl hydrolase 19 family. Chitinase class I subfamily.

The catalysed reaction is Random endo-hydrolysis of N-acetyl-beta-D-glucosaminide (1-&gt;4)-beta-linkages in chitin and chitodextrins.. Its function is as follows. Defense against chitin-containing fungal pathogens. The polypeptide is Endochitinase 1 (Capsicum chinense (Scotch bonnet)).